The following is a 453-amino-acid chain: Phosphoglucosamine mutase (453 aa).

Ser-100 (phosphoserine intermediate) is an active-site residue. Positions 100, 239, 241, and 243 each coordinate Mg(2+). A Phosphoserine modification is found at Ser-100.

It belongs to the phosphohexose mutase family. Mg(2+) serves as cofactor. Activated by phosphorylation.

The catalysed reaction is alpha-D-glucosamine 1-phosphate = D-glucosamine 6-phosphate. In terms of biological role, catalyzes the conversion of glucosamine-6-phosphate to glucosamine-1-phosphate. The sequence is that of Phosphoglucosamine mutase from Buchnera aphidicola subsp. Baizongia pistaciae (strain Bp).